The sequence spans 400 residues: 2-[(L-alanin-3-ylcarbamoyl)methyl]-2-hydroxybutanedioate decarboxylase (400 aa).

Lysine 50 carries the post-translational modification N6-(pyridoxal phosphate)lysine. Residues glycine 228 and 266-269 (ECGR) each bind pyridoxal 5'-phosphate. The active-site Proton donor is cysteine 344. Residue tyrosine 373 coordinates pyridoxal 5'-phosphate.

This sequence belongs to the Orn/Lys/Arg decarboxylase class-II family. In terms of assembly, homodimer. The cofactor is pyridoxal 5'-phosphate.

The catalysed reaction is 2-[(L-alanin-3-ylcarbamoyl)methyl]-2-hydroxybutanedioate + H(+) = 2-[(2-aminoethylcarbamoyl)methyl]-2-hydroxybutanedioate + CO2. It functions in the pathway siderophore biosynthesis. Its function is as follows. Catalyzes the decarboxylation of citryl-L-2,3-diaminopropionic acid to citryl-diaminoethane, the second step in staphyloferrin B biosynthesis. The polypeptide is 2-[(L-alanin-3-ylcarbamoyl)methyl]-2-hydroxybutanedioate decarboxylase (Staphylococcus aureus (strain NCTC 8325 / PS 47)).